Reading from the N-terminus, the 401-residue chain is Homoserine O-acetyltransferase (401 aa).

The 322-residue stretch at 37 to 358 folds into the AB hydrolase-1 domain; sequence NAVLVCHALT…HGHDAFLVEP (322 aa). The Nucleophile role is filled by Ser-146. Residue Arg-215 participates in substrate binding. Catalysis depends on residues Asp-318 and His-351. Asp-352 contacts substrate.

This sequence belongs to the AB hydrolase superfamily. MetX family. In terms of assembly, homodimer.

It is found in the cytoplasm. The enzyme catalyses L-homoserine + acetyl-CoA = O-acetyl-L-homoserine + CoA. Its pathway is amino-acid biosynthesis; L-methionine biosynthesis via de novo pathway; O-acetyl-L-homoserine from L-homoserine: step 1/1. Its function is as follows. Transfers an acetyl group from acetyl-CoA to L-homoserine, forming acetyl-L-homoserine. In Natronomonas pharaonis (strain ATCC 35678 / DSM 2160 / CIP 103997 / JCM 8858 / NBRC 14720 / NCIMB 2260 / Gabara) (Halobacterium pharaonis), this protein is Homoserine O-acetyltransferase.